Here is a 130-residue protein sequence, read N- to C-terminus: MSMQDPLADMLTRIRNAQMAEKSVVSMPSSTLKVAVAKVLKDEGYIAGYEVTGEAKPSLSIELKYFEGRPVIEELKRSSRPGLRQYKAVSELPKVRGGLGVSIVSTNKGVMTDRAARAAGVGGEVLCTVF.

This sequence belongs to the universal ribosomal protein uS8 family. As to quaternary structure, part of the 30S ribosomal subunit. Contacts proteins S5 and S12.

Functionally, one of the primary rRNA binding proteins, it binds directly to 16S rRNA central domain where it helps coordinate assembly of the platform of the 30S subunit. The chain is Small ribosomal subunit protein uS8 from Pseudomonas entomophila (strain L48).